Here is a 275-residue protein sequence, read N- to C-terminus: Dermonecrotic toxin SpeSicTox-betaIIA2iii (275 aa).

The active site involves His-5. Residues Glu-25 and Asp-27 each contribute to the Mg(2+) site. Residue His-41 is the Nucleophile of the active site. 2 disulfide bridges follow: Cys-45-Cys-51 and Cys-47-Cys-190. A Mg(2+)-binding site is contributed by Asp-85.

The protein belongs to the arthropod phospholipase D family. Class II subfamily. Mg(2+) is required as a cofactor. In terms of tissue distribution, expressed by the venom gland.

It is found in the secreted. The catalysed reaction is an N-(acyl)-sphingosylphosphocholine = an N-(acyl)-sphingosyl-1,3-cyclic phosphate + choline. It catalyses the reaction an N-(acyl)-sphingosylphosphoethanolamine = an N-(acyl)-sphingosyl-1,3-cyclic phosphate + ethanolamine. It carries out the reaction a 1-acyl-sn-glycero-3-phosphocholine = a 1-acyl-sn-glycero-2,3-cyclic phosphate + choline. The enzyme catalyses a 1-acyl-sn-glycero-3-phosphoethanolamine = a 1-acyl-sn-glycero-2,3-cyclic phosphate + ethanolamine. Functionally, dermonecrotic toxins cleave the phosphodiester linkage between the phosphate and headgroup of certain phospholipids (sphingolipid and lysolipid substrates), forming an alcohol (often choline) and a cyclic phosphate. This toxin acts on sphingomyelin (SM). It may also act on ceramide phosphoethanolamine (CPE), lysophosphatidylcholine (LPC) and lysophosphatidylethanolamine (LPE), but not on lysophosphatidylserine (LPS), and lysophosphatidylglycerol (LPG). It acts by transphosphatidylation, releasing exclusively cyclic phosphate products as second products. Induces dermonecrosis, hemolysis, increased vascular permeability, edema, inflammatory response, and platelet aggregation. The polypeptide is Dermonecrotic toxin SpeSicTox-betaIIA2iii (Sicarius peruensis (Six-eyed sand spider)).